The sequence spans 215 residues: Probable GTP-binding protein EngB (215 aa).

The 185-residue stretch at 31-215 (GPPEIAFAGR…RAAILQAIAV (185 aa)) folds into the EngB-type G domain. Residues 39–46 (GRSNVGKS), 66–70 (GRTQE), 93–96 (DMPG), 160–163 (TKSD), and 194–196 (TSS) contribute to the GTP site. Mg(2+)-binding residues include Ser-46 and Thr-68.

This sequence belongs to the TRAFAC class TrmE-Era-EngA-EngB-Septin-like GTPase superfamily. EngB GTPase family. Mg(2+) is required as a cofactor.

Functionally, necessary for normal cell division and for the maintenance of normal septation. This is Probable GTP-binding protein EngB from Bartonella quintana (strain Toulouse) (Rochalimaea quintana).